The following is a 208-amino-acid chain: Heart- and neural crest derivatives-expressed protein 2 (208 aa).

2 disordered regions span residues 79 to 106 (AGAVGMGPRTVKRRPTANRKERRRTQSI) and 161 to 197 (EFKKTDAKEERRKKEMNDVLKSSGSSNDKKTKGRTGW). Residues 88–103 (TVKRRPTANRKERRRT) are compositionally biased toward basic residues. Residues 90-142 (KRRPTANRKERRRTQSINSAFAELRECIPNVPADTKLSKIKTLRLATSYIAYL) form the bHLH domain. Basic and acidic residues predominate over residues 161–178 (EFKKTDAKEERRKKEMND).

As to quaternary structure, efficient DNA binding requires dimerization with another bHLH protein.

The protein resides in the nucleus. Its function is as follows. Essential for myocardial and pectoral fin differentiation, patterning and morphogenesis. This Danio rerio (Zebrafish) protein is Heart- and neural crest derivatives-expressed protein 2 (hand2).